The primary structure comprises 706 residues: Probable E3 ubiquitin ligase complex SCF subunit sconB (706 aa).

Positions 1–12 are enriched in basic and acidic residues; that stretch reads MQSDDRSVREGS. Disordered regions lie at residues 1–43 and 56–76; these read MQSD…LLQQ and TAEE…SFGA. Positions 34–43 are enriched in low complexity; it reads QQQQQQLLQQ. The 47-residue stretch at 203-249 folds into the F-box domain; the sequence is IDFLTALPPEISFKILCYLDTTSLCKAAQVSSRWRALADDDVVWHRM. WD repeat units lie at residues 377–414, 417–456, 458–494, 496–537, 589–632, 635–672, and 675–706; these read GHTN…ELRT, GHQS…STYT, HRGG…TFLL, GHTD…RTFH, ATET…CLRT, GHLE…CERT, and GHSG…SFRN.

It belongs to the WD repeat MET30/SCONB/SCON-2 family. Component of the SCF(sconB) E3 ubiquitin ligase complex.

It participates in protein modification; protein ubiquitination. Its function is as follows. Component of the SCF(sconB) E3 ubiquitin ligase complex involved in the regulation of sulfur metabolite repression, probably by mediating the inactivation or degradation of the metR transcription factor. This chain is Probable E3 ubiquitin ligase complex SCF subunit sconB (sconB), found in Aspergillus flavus (strain ATCC 200026 / FGSC A1120 / IAM 13836 / NRRL 3357 / JCM 12722 / SRRC 167).